A 392-amino-acid polypeptide reads, in one-letter code: L-serine phosphate decarboxylase (392 aa).

Residues 22–29 are required for catalytic activity; sequence NAGSHSPS. Residue Asn180 participates in O-phospho-L-serine binding. Residue Lys243 is modified to N6-(pyridoxal phosphate)lysine. 2 residues coordinate O-phospho-L-serine: Arg354 and Arg368.

Belongs to the class-II pyridoxal-phosphate-dependent aminotransferase family. As to quaternary structure, homodimer. Pyridoxal 5'-phosphate is required as a cofactor.

The enzyme catalyses O-phospho-L-serine + H(+) = phosphoethanolamine + CO2. It functions in the pathway cofactor biosynthesis. Pyridoxal phosphate (PLP)-dependent decarboxylase involved in the biosynthesis of norcobamides, cofactors in the tetrachloroethene reductive dehalogenase PceA of S.multivorans. Catalyzes the decarboxylation of L-serine O-phosphate to ethanolamine O-phosphate, the precursor for the linkage between the nucleotide loop and the corrin ring in norcobamide. Less active with L-threonine phosphate. No activity with L-serine or L-threonine. Has no aminotransferase activity as no production of L-glutamate with L-histidinol phosphate and 2-oxoglutarate as substrates. Complements growth defects in the S.enterica cobD deletion mutant, but of the cobamides, the norpseudo-vitamin B12 (norpseudo-B12) rather than the pseudo-B12 is produced in the mutant. However, addition of L-threonine phosphate to the culture minimal medium of the mutant results in formation of also the pseudo-B12, indicating the dual substrate specificity of this enzyme. In Sulfurospirillum multivorans (strain DM 12446 / JCM 15788 / NBRC 109480), this protein is L-serine phosphate decarboxylase.